We begin with the raw amino-acid sequence, 248 residues long: 4-hydroxy-tetrahydrodipicolinate reductase (248 aa).

Residues 9 to 14 (GAKGRV), 77 to 79 (GTT), and 104 to 107 (APNF) contribute to the NAD(+) site. The active-site Proton donor/acceptor is H134. H135 contacts (S)-2,3,4,5-tetrahydrodipicolinate. K138 (proton donor) is an active-site residue. 144–145 (GT) lines the (S)-2,3,4,5-tetrahydrodipicolinate pocket.

Belongs to the DapB family.

Its subcellular location is the cytoplasm. It carries out the reaction (S)-2,3,4,5-tetrahydrodipicolinate + NAD(+) + H2O = (2S,4S)-4-hydroxy-2,3,4,5-tetrahydrodipicolinate + NADH + H(+). The catalysed reaction is (S)-2,3,4,5-tetrahydrodipicolinate + NADP(+) + H2O = (2S,4S)-4-hydroxy-2,3,4,5-tetrahydrodipicolinate + NADPH + H(+). Its pathway is amino-acid biosynthesis; L-lysine biosynthesis via DAP pathway; (S)-tetrahydrodipicolinate from L-aspartate: step 4/4. Catalyzes the conversion of 4-hydroxy-tetrahydrodipicolinate (HTPA) to tetrahydrodipicolinate. In Corynebacterium aurimucosum (strain ATCC 700975 / DSM 44827 / CIP 107346 / CN-1) (Corynebacterium nigricans), this protein is 4-hydroxy-tetrahydrodipicolinate reductase.